We begin with the raw amino-acid sequence, 119 residues long: Protein yippee-like 3 (119 aa).

Positions 19-116 constitute a Yippee domain; sequence RRYSCAHCRA…IELNHMIKDN (98 aa). Positions 23, 26, 79, and 82 each coordinate Zn(2+).

Belongs to the yippee family. Post-translationally, probably ubiquitinated leading to its degradation by the proteasome.

It is found in the nucleus. It localises to the nucleolus. In terms of biological role, involved in proliferation and apoptosis in myeloid precursor cells. The polypeptide is Protein yippee-like 3 (YPEL3) (Bos taurus (Bovine)).